Reading from the N-terminus, the 35-residue chain is Alpha-amanitin proprotein 1 (35 aa).

Positions 1-10 (MSDINATRLP) are excised as a propeptide. Position 11 is a (3R,4R)-4,5-dihydroxyisoleucine; in form alpha-amanitin (isoleucine 11). Isoleucine 11 carries the (3R,4S)-4-hydroxyisoleucine; in form gamma-amanitin modification. Residues 11-18 (IWGIGCNP) constitute a cross-link (cyclopeptide (Ile-Pro)). A cross-link (2'-cysteinyl-6'-hydroxytryptophan sulfoxide (Trp-Cys)) is located at residues 12–16 (WGIGC). Proline 18 is modified (4-hydroxyproline). Positions 19–35 (CVGDDVTSVLTRGEALC) are excised as a propeptide.

The protein belongs to the MSDIN fungal toxin family. In terms of processing, processed by the macrocyclase-peptidase enzyme POPB to yield a toxic cyclic octapeptide. POPB first removes 10 residues from the N-terminus. Conformational trapping of the remaining peptide forces the enzyme to release this intermediate rather than proceed to macrocyclization. The enzyme rebinds the remaining peptide in a different conformation and catalyzes macrocyclization of the N-terminal 8 residues. In terms of tissue distribution, expressed in basidiocarps.

Its function is as follows. Major toxin belonging to the bicyclic octapeptides amatoxins that acts by binding non-competitively to RNA polymerase II and greatly slowing the elongation of transcripts from target promoters. This is Alpha-amanitin proprotein 1 from Amanita exitialis (Guangzhou destroying angel).